A 294-amino-acid chain; its full sequence is Cytidine deaminase (294 aa).

CMP/dCMP-type deaminase domains are found at residues 48 to 168 (DEDA…FGPK) and 186 to 294 (LTGD…VLLA). 89–91 (NME) is a substrate binding site. H102 contacts Zn(2+). E104 functions as the Proton donor in the catalytic mechanism. Residues C129 and C132 each contribute to the Zn(2+) site.

The protein belongs to the cytidine and deoxycytidylate deaminase family. Homodimer. The cofactor is Zn(2+).

The catalysed reaction is cytidine + H2O + H(+) = uridine + NH4(+). It catalyses the reaction 2'-deoxycytidine + H2O + H(+) = 2'-deoxyuridine + NH4(+). Functionally, this enzyme scavenges exogenous and endogenous cytidine and 2'-deoxycytidine for UMP synthesis. The protein is Cytidine deaminase of Shigella dysenteriae serotype 1 (strain Sd197).